We begin with the raw amino-acid sequence, 204 residues long: Protein GrpE (204 aa).

Positions 1-12 (MSNQEKKMHEEE) are enriched in basic and acidic residues. The tract at residues 1-37 (MSNQEKKMHEEELQQQETVEADTEAEAEAVGTDADIE) is disordered.

The protein belongs to the GrpE family. In terms of assembly, homodimer.

It localises to the cytoplasm. Functionally, participates actively in the response to hyperosmotic and heat shock by preventing the aggregation of stress-denatured proteins, in association with DnaK and GrpE. It is the nucleotide exchange factor for DnaK and may function as a thermosensor. Unfolded proteins bind initially to DnaJ; upon interaction with the DnaJ-bound protein, DnaK hydrolyzes its bound ATP, resulting in the formation of a stable complex. GrpE releases ADP from DnaK; ATP binding to DnaK triggers the release of the substrate protein, thus completing the reaction cycle. Several rounds of ATP-dependent interactions between DnaJ, DnaK and GrpE are required for fully efficient folding. This chain is Protein GrpE, found in Vibrio proteolyticus (Aeromonas proteolytica).